Reading from the N-terminus, the 66-residue chain is UPF0337 protein BA_0987/GBAA_0987/BAS0923 (66 aa).

Residues 1–22 (MSESGLKEQITGKVEKTKGQVK) are disordered. Residues 13 to 22 (KVEKTKGQVK) are compositionally biased toward basic and acidic residues.

It belongs to the UPF0337 (CsbD) family.

This chain is UPF0337 protein BA_0987/GBAA_0987/BAS0923, found in Bacillus anthracis.